A 318-amino-acid polypeptide reads, in one-letter code: 2-keto-3-deoxygluconate permease (318 aa).

The next 10 membrane-spanning stretches (helical) occupy residues 10–30, 42–62, 76–96, 105–125, 139–159, 163–183, 199–219, 224–244, 263–283, and 289–309; these read IPGG…TFTP, GLIT…GASI, VLVV…GTFL, MLAG…NGGL, AGAF…VILG, IATF…IGFA, VQTL…LSVI, FAGI…LILA, AGAA…FAPV, and ALVA…TALW.

It belongs to the KdgT transporter family.

It is found in the cell inner membrane. It catalyses the reaction 2-dehydro-3-deoxy-D-gluconate(in) + H(+)(in) = 2-dehydro-3-deoxy-D-gluconate(out) + H(+)(out). Catalyzes the proton-dependent uptake of 2-keto-3-deoxygluconate (KDG) into the cell. The sequence is that of 2-keto-3-deoxygluconate permease from Pectobacterium carotovorum subsp. carotovorum (Erwinia carotovora subsp. carotovora).